A 585-amino-acid chain; its full sequence is 3-hydroxy-3-methylglutaryl-coenzyme A reductase 1 (585 aa).

2 helical membrane-spanning segments follow: residues 38–58 (LYLT…FLLC) and 77–97 (EIVA…FFGI). Positions 98–169 (DFVQSLVLRP…DEMPVTVMTE (72 aa)) are linker. The tract at residues 170–585 (EDEEIIRSVV…SSKDVSKVSS (416 aa)) is catalytic. The Charge relay system role is filled by Glu-264. The N-linked (GlcNAc...) asparagine glycan is linked to Asn-328. Lys-396 (charge relay system) is an active-site residue. An N-linked (GlcNAc...) asparagine glycan is attached at Asn-441. Asp-472 functions as the Charge relay system in the catalytic mechanism. The Proton donor role is filled by His-570. Asn-574 is a glycosylation site (N-linked (GlcNAc...) asparagine).

It belongs to the HMG-CoA reductase family.

It is found in the endoplasmic reticulum membrane. The protein resides in the mitochondrion membrane. The protein localises to the plastid membrane. The enzyme catalyses (R)-mevalonate + 2 NADP(+) + CoA = (3S)-3-hydroxy-3-methylglutaryl-CoA + 2 NADPH + 2 H(+). It functions in the pathway metabolic intermediate biosynthesis; (R)-mevalonate biosynthesis; (R)-mevalonate from acetyl-CoA: step 3/3. Its function is as follows. Catalyzes the synthesis of mevalonate. The specific precursor of all isoprenoid compounds present in plants. The chain is 3-hydroxy-3-methylglutaryl-coenzyme A reductase 1 (HMG1) from Gossypium hirsutum (Upland cotton).